Here is a 426-residue protein sequence, read N- to C-terminus: Glutamate-1-semialdehyde 2,1-aminomutase (426 aa).

Position 265 is an N6-(pyridoxal phosphate)lysine (Lys265).

This sequence belongs to the class-III pyridoxal-phosphate-dependent aminotransferase family. HemL subfamily. As to quaternary structure, homodimer. It depends on pyridoxal 5'-phosphate as a cofactor.

Its subcellular location is the cytoplasm. It catalyses the reaction (S)-4-amino-5-oxopentanoate = 5-aminolevulinate. Its pathway is porphyrin-containing compound metabolism; protoporphyrin-IX biosynthesis; 5-aminolevulinate from L-glutamyl-tRNA(Glu): step 2/2. The protein is Glutamate-1-semialdehyde 2,1-aminomutase of Halorhodospira halophila (strain DSM 244 / SL1) (Ectothiorhodospira halophila (strain DSM 244 / SL1)).